A 96-amino-acid chain; its full sequence is UPF0235 protein YggU (96 aa).

Belongs to the UPF0235 family.

This chain is UPF0235 protein YggU, found in Salmonella newport (strain SL254).